The sequence spans 445 residues: 3-phosphoshikimate 1-carboxyvinyltransferase (445 aa).

3-phosphoshikimate contacts are provided by Lys28, Ser29, and Arg33. Lys28 contacts phosphoenolpyruvate. Phosphoenolpyruvate-binding residues include Gly101 and Arg129. Ser175, Gln177, Asp328, and Lys355 together coordinate 3-phosphoshikimate. Position 177 (Gln177) interacts with phosphoenolpyruvate. Catalysis depends on Asp328, which acts as the Proton acceptor. The phosphoenolpyruvate site is built by Arg359 and Arg402.

The protein belongs to the EPSP synthase family. Monomer.

The protein localises to the cytoplasm. It catalyses the reaction 3-phosphoshikimate + phosphoenolpyruvate = 5-O-(1-carboxyvinyl)-3-phosphoshikimate + phosphate. It functions in the pathway metabolic intermediate biosynthesis; chorismate biosynthesis; chorismate from D-erythrose 4-phosphate and phosphoenolpyruvate: step 6/7. Catalyzes the transfer of the enolpyruvyl moiety of phosphoenolpyruvate (PEP) to the 5-hydroxyl of shikimate-3-phosphate (S3P) to produce enolpyruvyl shikimate-3-phosphate and inorganic phosphate. In Rhodopseudomonas palustris (strain BisA53), this protein is 3-phosphoshikimate 1-carboxyvinyltransferase.